A 332-amino-acid chain; its full sequence is Glycerol-3-phosphate dehydrogenase [NAD(P)+] (332 aa).

NADPH-binding residues include Trp13, Lys34, and Lys108. Lys108, Gly136, and Ser138 together coordinate sn-glycerol 3-phosphate. An NADPH-binding site is contributed by Ala140. Residues Lys191, Asp244, Ser254, Arg255, and Asn256 each coordinate sn-glycerol 3-phosphate. The active-site Proton acceptor is Lys191. Arg255 provides a ligand contact to NADPH. Val279 and Glu281 together coordinate NADPH.

Belongs to the NAD-dependent glycerol-3-phosphate dehydrogenase family.

It localises to the cytoplasm. It catalyses the reaction sn-glycerol 3-phosphate + NAD(+) = dihydroxyacetone phosphate + NADH + H(+). The enzyme catalyses sn-glycerol 3-phosphate + NADP(+) = dihydroxyacetone phosphate + NADPH + H(+). It functions in the pathway membrane lipid metabolism; glycerophospholipid metabolism. In terms of biological role, catalyzes the reduction of the glycolytic intermediate dihydroxyacetone phosphate (DHAP) to sn-glycerol 3-phosphate (G3P), the key precursor for phospholipid synthesis. This chain is Glycerol-3-phosphate dehydrogenase [NAD(P)+], found in Francisella tularensis subsp. novicida (strain U112).